The chain runs to 113 residues: Ig kappa chain V-II region MOPC 511 (113 aa).

A framework-1 region spans residues 1-23; that stretch reads DIVITQDELSKPVTSGESVSISC. Cysteines 23 and 93 form a disulfide. The complementarity-determining-1 stretch occupies residues 24 to 39; sequence RSSKSLLYKDGKTYLN. Residues 40–54 form a framework-2 region; it reads WFLQGPQQSPRLLIY. A complementarity-determining-2 region spans residues 55–61; sequence LMSTRAS. A framework-3 region spans residues 62–93; sequence GVSDRFSGSGSGTDFTLEISRVKAEDVGVYYC. The segment at 94 to 102 is complementarity-determining-3; the sequence is QQLVEYPLT. Residues 103–112 form a framework-4 region; it reads FGAGTKLELK.

The polypeptide is Ig kappa chain V-II region MOPC 511 (Mus musculus (Mouse)).